We begin with the raw amino-acid sequence, 342 residues long: P21 prophage-derived major head protein (342 aa).

This sequence belongs to the lambda phage major capsid protein family.

The polypeptide is P21 prophage-derived major head protein (Escherichia coli O6:H1 (strain CFT073 / ATCC 700928 / UPEC)).